A 227-amino-acid polypeptide reads, in one-letter code: Cytochrome c oxidase subunit 2 (227 aa).

Residues 1-14 (MAHAAQVGLQDATS) are Mitochondrial intermembrane-facing. The helical transmembrane segment at 15-45 (PIMEELITFHDHALMIIFLICFLVLYALFLT) threads the bilayer. The Mitochondrial matrix portion of the chain corresponds to 46-59 (LTTKLTNTNISDAQ). The chain crosses the membrane as a helical span at residues 60–87 (EMETVWTILPAIILVLIALPSLRILYMT). Residues 88 to 227 (DEVNDPSLTI…IFEMGPVFTL (140 aa)) lie on the Mitochondrial intermembrane side of the membrane. Cu cation contacts are provided by H161, C196, E198, C200, H204, and M207. E198 is a Mg(2+) binding site.

This sequence belongs to the cytochrome c oxidase subunit 2 family. As to quaternary structure, component of the cytochrome c oxidase (complex IV, CIV), a multisubunit enzyme composed of 14 subunits. The complex is composed of a catalytic core of 3 subunits MT-CO1, MT-CO2 and MT-CO3, encoded in the mitochondrial DNA, and 11 supernumerary subunits COX4I1 (or COX4I2), COX5A, COX5B, COX6A1 (or COX6A2), COX6B1 (or COX6B2), COX6C, COX7A2 (or COX7A1), COX7B, COX7C, COX8A and NDUFA4, which are encoded in the nuclear genome. The complex exists as a monomer or a dimer and forms supercomplexes (SCs) in the inner mitochondrial membrane with NADH-ubiquinone oxidoreductase (complex I, CI) and ubiquinol-cytochrome c oxidoreductase (cytochrome b-c1 complex, complex III, CIII), resulting in different assemblies (supercomplex SCI(1)III(2)IV(1) and megacomplex MCI(2)III(2)IV(2)). Found in a complex with TMEM177, COA6, COX18, COX20, SCO1 and SCO2. Interacts with TMEM177 in a COX20-dependent manner. Interacts with COX20. Interacts with COX16. The cofactor is Cu cation.

Its subcellular location is the mitochondrion inner membrane. The catalysed reaction is 4 Fe(II)-[cytochrome c] + O2 + 8 H(+)(in) = 4 Fe(III)-[cytochrome c] + 2 H2O + 4 H(+)(out). In terms of biological role, component of the cytochrome c oxidase, the last enzyme in the mitochondrial electron transport chain which drives oxidative phosphorylation. The respiratory chain contains 3 multisubunit complexes succinate dehydrogenase (complex II, CII), ubiquinol-cytochrome c oxidoreductase (cytochrome b-c1 complex, complex III, CIII) and cytochrome c oxidase (complex IV, CIV), that cooperate to transfer electrons derived from NADH and succinate to molecular oxygen, creating an electrochemical gradient over the inner membrane that drives transmembrane transport and the ATP synthase. Cytochrome c oxidase is the component of the respiratory chain that catalyzes the reduction of oxygen to water. Electrons originating from reduced cytochrome c in the intermembrane space (IMS) are transferred via the dinuclear copper A center (CU(A)) of subunit 2 and heme A of subunit 1 to the active site in subunit 1, a binuclear center (BNC) formed by heme A3 and copper B (CU(B)). The BNC reduces molecular oxygen to 2 water molecules using 4 electrons from cytochrome c in the IMS and 4 protons from the mitochondrial matrix. The polypeptide is Cytochrome c oxidase subunit 2 (MT-CO2) (Homo sapiens (Human)).